The following is a 325-amino-acid chain: Olfactory receptor 6Y1 (325 aa).

Residues 1 to 30 (MTTIILEVDNHTVTTRFILLGFPTRPAFQL) are Extracellular-facing. Residue Asn10 is glycosylated (N-linked (GlcNAc...) asparagine). Residues 31–51 (LFFSIFLATYLLTLLENLLII) form a helical membrane-spanning segment. Residues 52–59 (LAIHSDGQ) lie on the Cytoplasmic side of the membrane. The helical transmembrane segment at 60 to 80 (LHKPMYFFLSHLSFLEMWYVT) threads the bilayer. Residues 81 to 104 (VISPKMLVDFLSHDKSISFNGCMT) are Extracellular-facing. Cys102 and Cys194 are oxidised to a cystine. The helical transmembrane segment at 105-125 (QLYFFVTFVCTEYILLAIMAF) threads the bilayer. At 126 to 144 (DRYVAICNPLRYPVIMTNQ) the chain is on the cytoplasmic side. The chain crosses the membrane as a helical span at residues 145-165 (LCGTLAGGCWFCGLMTAMIKM). Residues 166 to 202 (VFIAQLHYCGMPQINHYFCDISPLLNVSCEDASQAEM) lie on the Extracellular side of the membrane. Asn191 carries an N-linked (GlcNAc...) asparagine glycan. The chain crosses the membrane as a helical span at residues 203-222 (VDFFLALMVIAIPLCVVVAS). The Cytoplasmic segment spans residues 223-242 (YAAILATILRIPSAQGRQKA). Residues 243 to 263 (FSTCASHLTVVILFYSMTLFT) form a helical membrane-spanning segment. The Extracellular segment spans residues 264 to 276 (YARPKLMYAYNSN). A helical transmembrane segment spans residues 277 to 297 (KVVSVLYTVIVPLLNPIIYCL). Over 298–325 (RNHEVKAALRKTIHCRGSGPQGNGAFSS) the chain is Cytoplasmic.

This sequence belongs to the G-protein coupled receptor 1 family.

The protein localises to the cell membrane. Odorant receptor. The protein is Olfactory receptor 6Y1 (OR6Y1) of Homo sapiens (Human).